The primary structure comprises 146 residues: Anti-sigma F factor (146 aa).

It belongs to the anti-sigma-factor family.

The catalysed reaction is L-seryl-[protein] + ATP = O-phospho-L-seryl-[protein] + ADP + H(+). It catalyses the reaction L-threonyl-[protein] + ATP = O-phospho-L-threonyl-[protein] + ADP + H(+). In terms of biological role, binds to sigma F and blocks its ability to form an RNA polymerase holoenzyme (E-sigma F). Phosphorylates SpoIIAA on a serine residue. This phosphorylation may enable SpoIIAA to act as an anti-anti-sigma factor that counteracts SpoIIAB and thus releases sigma F from inhibition. The protein is Anti-sigma F factor of Bacillus cytotoxicus (strain DSM 22905 / CIP 110041 / 391-98 / NVH 391-98).